The primary structure comprises 189 residues: Protein Flattop (189 aa).

A disordered region spans residues 112 to 189 (EISGKPFDPD…PPPSPCKSTK (78 aa)). Over residues 137-148 (APNPTIIPSSPV) the composition is skewed to polar residues. A compositionally biased stretch (pro residues) spans 178-189 (NNPPPSPCKSTK).

This sequence belongs to the Flattop family. In terms of assembly, microtubule inner protein component of sperm flagellar doublet microtubules. Interacts with DLG3. Expressed in mono- and multiciliated tissues during planar cell polarity acquisition.

The protein resides in the cytoplasm. Its subcellular location is the cytoskeleton. It localises to the cilium basal body. The protein localises to the cilium axoneme. It is found in the flagellum axoneme. The protein resides in the apical cell membrane. Functionally, microtubule inner protein (MIP) part of the dynein-decorated doublet microtubules (DMTs) in cilia axoneme. Acts as a regulator of cilium basal body docking and positioning in mono- and multiciliated cells. Regulates basal body docking and cilia formation in multiciliated lung cells. Regulates kinocilium positioning and stereocilia bundle morphogenesis in the inner ear. This is Protein Flattop from Mus musculus (Mouse).